Reading from the N-terminus, the 30-residue chain is Cyclotide vdif-A (30 aa).

The segment at residues 1 to 30 (GIPCGESCVFIPCISSVVGCSCKSKVCYRN) is a cross-link (cyclopeptide (Gly-Asn)). 3 cysteine pairs are disulfide-bonded: C4–C20, C8–C22, and C13–C27.

This sequence belongs to the cyclotide family. Bracelet subfamily. Post-translationally, this is a cyclic peptide.

Functionally, probably participates in a plant defense mechanism. The polypeptide is Cyclotide vdif-A (Viola diffusa).